Consider the following 161-residue polypeptide: Extracellular giant hemoglobin major globin subunit B1 (161 aa).

Residues 1–16 (MTILVLFLSCAALASA) form the signal peptide. Positions 18–161 (CCSRGDAEVV…YIAAGIGAGL (144 aa)) constitute a Globin domain. A disulfide bond links C19 and C149. Residue H112 coordinates heme b.

This sequence belongs to the globin family. The 400 kDa hemoglobin consists of a spherical 24-mer arranged as a double layer of dome-shaped dodecamers. Each dodecamer is composed of the 3-fold trimer of the tetramer A1-A2-B1-B2 having one intra-tetramer (A1-B2) disulfide bond and one inter-tetramer (B1-B2) disulfide bond per tetramer.

It localises to the secreted. Functionally, the extracellular giant hemoglobin is able to bind and transport oxygen and sulfide simultaneously and reversibly at two different sites. The chain is Extracellular giant hemoglobin major globin subunit B1 (ghbB1) from Oligobrachia mashikoi (Beard worm).